The chain runs to 173 residues: Crossover junction endodeoxyribonuclease RuvC (173 aa).

Catalysis depends on residues D8, E67, and D139. Residues D8, E67, and D139 each coordinate Mg(2+).

It belongs to the RuvC family. In terms of assembly, homodimer which binds Holliday junction (HJ) DNA. The HJ becomes 2-fold symmetrical on binding to RuvC with unstacked arms; it has a different conformation from HJ DNA in complex with RuvA. In the full resolvosome a probable DNA-RuvA(4)-RuvB(12)-RuvC(2) complex forms which resolves the HJ. Requires Mg(2+) as cofactor.

Its subcellular location is the cytoplasm. It carries out the reaction Endonucleolytic cleavage at a junction such as a reciprocal single-stranded crossover between two homologous DNA duplexes (Holliday junction).. In terms of biological role, the RuvA-RuvB-RuvC complex processes Holliday junction (HJ) DNA during genetic recombination and DNA repair. Endonuclease that resolves HJ intermediates. Cleaves cruciform DNA by making single-stranded nicks across the HJ at symmetrical positions within the homologous arms, yielding a 5'-phosphate and a 3'-hydroxyl group; requires a central core of homology in the junction. The consensus cleavage sequence is 5'-(A/T)TT(C/G)-3'. Cleavage occurs on the 3'-side of the TT dinucleotide at the point of strand exchange. HJ branch migration catalyzed by RuvA-RuvB allows RuvC to scan DNA until it finds its consensus sequence, where it cleaves and resolves the cruciform DNA. This is Crossover junction endodeoxyribonuclease RuvC from Shewanella sp. (strain ANA-3).